Consider the following 269-residue polypeptide: Tryptophan synthase alpha chain (269 aa).

Active-site proton acceptor residues include Glu-54 and Asp-65.

It belongs to the TrpA family. In terms of assembly, tetramer of two alpha and two beta chains.

It catalyses the reaction (1S,2R)-1-C-(indol-3-yl)glycerol 3-phosphate + L-serine = D-glyceraldehyde 3-phosphate + L-tryptophan + H2O. Its pathway is amino-acid biosynthesis; L-tryptophan biosynthesis; L-tryptophan from chorismate: step 5/5. In terms of biological role, the alpha subunit is responsible for the aldol cleavage of indoleglycerol phosphate to indole and glyceraldehyde 3-phosphate. This is Tryptophan synthase alpha chain from Synechococcus sp. (strain CC9902).